Here is a 201-residue protein sequence, read N- to C-terminus: Adenylyl-sulfate kinase (201 aa).

35–42 (GLSGSGKS) provides a ligand contact to ATP. S109 (phosphoserine intermediate) is an active-site residue.

This sequence belongs to the APS kinase family.

The catalysed reaction is adenosine 5'-phosphosulfate + ATP = 3'-phosphoadenylyl sulfate + ADP + H(+). The protein operates within sulfur metabolism; hydrogen sulfide biosynthesis; sulfite from sulfate: step 2/3. Its function is as follows. Catalyzes the synthesis of activated sulfate. The chain is Adenylyl-sulfate kinase from Shigella boydii serotype 18 (strain CDC 3083-94 / BS512).